We begin with the raw amino-acid sequence, 206 residues long: Dephospho-CoA kinase (206 aa).

Residues 4 to 204 (IVGLTGGIGS…QFYLQQAENK (201 aa)) form the DPCK domain. 12 to 17 (GSGKTT) is a binding site for ATP.

It belongs to the CoaE family.

It localises to the cytoplasm. It catalyses the reaction 3'-dephospho-CoA + ATP = ADP + CoA + H(+). It functions in the pathway cofactor biosynthesis; coenzyme A biosynthesis; CoA from (R)-pantothenate: step 5/5. In terms of biological role, catalyzes the phosphorylation of the 3'-hydroxyl group of dephosphocoenzyme A to form coenzyme A. The polypeptide is Dephospho-CoA kinase (Haemophilus influenzae (strain 86-028NP)).